The primary structure comprises 151 residues: 3-hydroxyacyl-[acyl-carrier-protein] dehydratase FabZ (151 aa).

Histidine 54 is an active-site residue.

This sequence belongs to the thioester dehydratase family. FabZ subfamily.

Its subcellular location is the cytoplasm. It catalyses the reaction a (3R)-hydroxyacyl-[ACP] = a (2E)-enoyl-[ACP] + H2O. Functionally, involved in unsaturated fatty acids biosynthesis. Catalyzes the dehydration of short chain beta-hydroxyacyl-ACPs and long chain saturated and unsaturated beta-hydroxyacyl-ACPs. The chain is 3-hydroxyacyl-[acyl-carrier-protein] dehydratase FabZ from Buchnera aphidicola subsp. Acyrthosiphon pisum (strain 5A).